The primary structure comprises 378 residues: uncharacterized protein (378 aa).

It belongs to the IIV-6 329R family.

This is an uncharacterized protein from Acheta domesticus (House cricket).